We begin with the raw amino-acid sequence, 537 residues long: Cytochrome P450 monooxygenase yanC (537 aa).

Residues 1 to 21 form the signal peptide; that stretch reads MALVHLTALAACGLLLVILRA. Cysteine 449 provides a ligand contact to heme.

It belongs to the cytochrome P450 family. Heme is required as a cofactor.

Its pathway is secondary metabolite biosynthesis; terpenoid biosynthesis. Functionally, cytochrome P450 monooxygenase; part of the gene cluster that mediates the biosynthesis of yanuthone D, a fungal isoprenoid epoxycyclohexenone that acts as an antibiotic against fungi and bacteria. The first step of the pathway is the synthesis of 6-methylsalicylic acid (6-MSA) by the polyketide synthase yanA. 6-MSA is then converted to m-cresol by the decarboxylase yanB. The cytochrome P450 monooxygenase yanC then catalyzes the oxidation of m-cresol to toluquinol. Epoxidation of toluquinol is then performed by the short chain dehydrogenase yanD, with the help of yanE, and a further prenylation by yanG leads to 7-deacetoxyyanuthone A. The next step is the hydroxylation of C-22 of 7-deacetoxyyanuthone A by the cytochrome P450 monooxygenase yanH to yield 22-deacetylyanuthone A. O-Mevalon transferase yanI then attaches mevalon to the hydroxyl group of 22-deacetylyanuthone A to produce yanuthone E. Finally, the FAD-dependent monooxygenase yanF oxidizes the hydroxyl group at C15 of yanuthone E to form yanuthone D. Furthermore, several branching points in the pathway lead to the production of yanuthones F and G from 7-deacetoxyyanuthone A; yanuthones H and I from 22-deacetylyanuthone A; and yanuthone J from yanuthone E. YanC is also involved in the synthesis of yanuthone X1 which does not have 6-methylsalicylic acid (6-MSA) as precursor. The chain is Cytochrome P450 monooxygenase yanC from Aspergillus niger (strain ATCC 1015 / CBS 113.46 / FGSC A1144 / LSHB Ac4 / NCTC 3858a / NRRL 328 / USDA 3528.7).